Here is a 1054-residue protein sequence, read N- to C-terminus: Probable sucrose-phosphate synthase 1 (1054 aa).

Basic and acidic residues predominate over residues 104–115 (RLERERGRREAV). Disordered stretches follow at residues 104–125 (RLER…LSEG), 674–693 (LRNE…SDSL), and 708–727 (DGDK…DDRA).

It belongs to the glycosyltransferase 1 family. As to quaternary structure, homodimer or homotetramer.

It catalyses the reaction beta-D-fructose 6-phosphate + UDP-alpha-D-glucose = sucrose 6(F)-phosphate + UDP + H(+). It functions in the pathway glycan biosynthesis; sucrose biosynthesis; sucrose from D-fructose 6-phosphate and UDP-alpha-D-glucose: step 1/2. Its activity is regulated as follows. Activity is regulated by phosphorylation and moderated by concentration of metabolites and light. In terms of biological role, plays a role in photosynthetic sucrose synthesis by catalyzing the rate-limiting step of sucrose biosynthesis from UDP-glucose and fructose- 6-phosphate. Involved in the regulation of carbon partitioning in the leaves of plants. May regulate the synthesis of sucrose and therefore play a major role as a limiting factor in the export of photoassimilates out of the leaf. Plays a role for sucrose availability that is essential for plant growth and fiber elongation. The sequence is that of Probable sucrose-phosphate synthase 1 (SPS1) from Craterostigma plantagineum (Blue gem).